A 30-amino-acid polypeptide reads, in one-letter code: FVYGNGVTSILVQAQFLVNGQRRFFYTPDK.

This sequence belongs to the bacteriocin class IIA/YGNGV family.

The protein resides in the secreted. Its function is as follows. Bacteriocin with antibacterial activity against C.jejuni. The chain is Bacteriocin SRCAM 37 from Paenibacillus polymyxa (Bacillus polymyxa).